A 670-amino-acid polypeptide reads, in one-letter code: MRLQCVVLFAALTLVAATHAPPNVKTVLSAEQHDIPVKRLLRPGNPAGKEDEERGINFSSVPGFEKLANLLKPKPGLKKLLKWADAKKPPETVFTRLRLDKTGTQLFDNTDFPVWAAYTRSVAQTDSEASAVMLKTLVSRYSDEVLSGMIAAAKKSSKTESIATKLETEQMRTWLAAKKTPDDMFLVFKLNKAGDDILSSPLLSAWTNYMKLSNKENPKAQTTLIATMTKHYGDSGVSQILAAARKSPATQSTAKRLEAEQVQLWLKKGRTPDDTFTLLSLDRAGDDLLASPQFNTWMKYINYYNKENPDEKTTVLAKLMTHFDDEELTPILVVARKVPSTESTAAKLQAEQFKNWLSADKSPEEAFTLLQLDKAGDDLLTNPQLTNWLKYTENFNLNKEINEQVTAIQVFRAQYVDDSRIANMVIAAEKVPNTQAIAKRVEDELFKGWTVVLNKPDDVFINLKLETVGENVFESPLWSFYTKFLEKYNTANPGKEQTMISGLARGYNDVTLTNMLLKAKEAPSTKTLATKLEDELVQYWLADKKLPDKLFGYLELKESVDGILTNPVFNVWLKYLNAFNDKAPVKKALMIDTLKSAFGDVAVSNMLFAAKKDPGTAKVAATLQTALLSKWVLEKKTPGQVSAILKEGAGADVSAKLLATYSAKFKVRWG.

The N-terminal stretch at 1–17 is a signal peptide; sequence MRLQCVVLFAALTLVAA. The RxLR-dEER motif lies at 39–54; that stretch reads RLLRPGNPAGKEDEER. N57 carries an N-linked (GlcNAc...) asparagine glycan. Residues 79-126 form a WY1 repeat; that stretch reads KLLKWADAKKPPETVFTRLRLDKTGTQLFDNTDFPVWAAYTRSVAQTD. Residues 79–670 form a 7 X 93 AA tandem repeats region; it reads KLLKWADAKK…YSAKFKVRWG (592 aa). Residues 127-217 form an LWY2 repeat; sequence SEASAVMLKT…NYMKLSNKEN (91 aa). The stretch at 218–308 is one LWY3 repeat; that stretch reads PKAQTTLIAT…KYINYYNKEN (91 aa). Residues 309–399 form an LWY4 repeat; sequence PDEKTTVLAK…KYTENFNLNK (91 aa). The stretch at 400-492 is one LWY5 repeat; sequence EINEQVTAIQ…KFLEKYNTAN (93 aa). The stretch at 493 to 583 is one LWY6 repeat; the sequence is PGKEQTMISG…KYLNAFNDKA (91 aa). The stretch at 584-670 is one LWY7 repeat; it reads PVKKALMIDT…YSAKFKVRWG (87 aa).

Belongs to the RxLR effector family. As to quaternary structure, interacts with host dsRNA-binding protein DRB4.

It is found in the secreted. Its subcellular location is the host cell. Functionally, secreted effector that possesses RNA silencing suppression activity by inhibiting the biogenesis of small RNAs in the host plant to promote enhanced susceptibility of host to the pathogen during infection. Interferes with secondary siRNA production by associating with host dsRNA-binding protein DRB4. Inhibits the host salicylic acid pathway during infection. The protein is RxLR effector protein PSR2 of Phytophthora sojae (Soybean stem and root rot agent).